A 164-amino-acid polypeptide reads, in one-letter code: uncharacterized protein (164 aa).

Residues 1-77 are disordered; sequence MGQKKTMGTE…PCSIRDAPFH (77 aa).

This is an uncharacterized protein from Homo sapiens (Human).